The sequence spans 130 residues: Cytochrome c-type biogenesis protein CcmE (130 aa).

Over 1 to 7 (MKKKHKR) the chain is Cytoplasmic. Residues 8–28 (LLITSGIFCFLSCAVFFILTT) form a helical; Signal-anchor for type II membrane protein membrane-spanning segment. The Extracellular portion of the chain corresponds to 29 to 130 (LKENISFFYT…DENYKPKVLK (102 aa)). The heme site is built by histidine 120 and tyrosine 124.

The protein belongs to the CcmE/CycJ family.

It is found in the cell membrane. In terms of biological role, heme chaperone required for the biogenesis of c-type cytochromes. Transiently binds heme delivered by CcmC and transfers the heme to apo-cytochromes in a process facilitated by CcmF and CcmH. The protein is Cytochrome c-type biogenesis protein CcmE of Wolbachia pipientis subsp. Culex pipiens (strain wPip).